Reading from the N-terminus, the 256-residue chain is MLRIADKTFNSHLFTGTGKFASSQLMVEAIRASGSQLVTLAMKRVDLRQHNDAILMPLIEAGVTLLPNTSGAKTAEEAIFAAQLAREALGTHWLKLEIHPDARWLLPDPIETLKAAEALVKQGFVVLPYCGADPVLCKRLEEVGCAAVMPLGAPIGSNQGLETKAMLEIIIQQSTVPVVVDAGIGVPSHATQALEMGADAVLVNTAIAVADDPVMMATAFRLAVEAGVLARQAVPGNRSPYASATSPLTGFLEALA.

Lysine 95 serves as the catalytic Schiff-base intermediate with DXP. 1-deoxy-D-xylulose 5-phosphate contacts are provided by residues glycine 156, 182–183 (AG), and 204–205 (NT).

This sequence belongs to the ThiG family. As to quaternary structure, homotetramer. Forms heterodimers with either ThiH or ThiS.

It localises to the cytoplasm. The catalysed reaction is [ThiS sulfur-carrier protein]-C-terminal-Gly-aminoethanethioate + 2-iminoacetate + 1-deoxy-D-xylulose 5-phosphate = [ThiS sulfur-carrier protein]-C-terminal Gly-Gly + 2-[(2R,5Z)-2-carboxy-4-methylthiazol-5(2H)-ylidene]ethyl phosphate + 2 H2O + H(+). Its pathway is cofactor biosynthesis; thiamine diphosphate biosynthesis. Its function is as follows. Catalyzes the rearrangement of 1-deoxy-D-xylulose 5-phosphate (DXP) to produce the thiazole phosphate moiety of thiamine. Sulfur is provided by the thiocarboxylate moiety of the carrier protein ThiS. In vitro, sulfur can be provided by H(2)S. This is Thiazole synthase from Salmonella schwarzengrund (strain CVM19633).